The primary structure comprises 165 residues: uncharacterized protein (165 aa).

Positions 1 to 36 (MTRLCLPRPEAREDPIPVPPRGLGAGEGSGSPVRPP) are disordered. A helical transmembrane segment spans residues 135-155 (LLLLMGLGPLLRACGMPLTLL).

Its subcellular location is the membrane. This is an uncharacterized protein from Homo sapiens (Human).